The sequence spans 159 residues: 3-hydroxyacyl-[acyl-carrier-protein] dehydratase FabZ (159 aa).

Residue H58 is part of the active site.

It belongs to the thioester dehydratase family. FabZ subfamily.

The protein localises to the cytoplasm. The catalysed reaction is a (3R)-hydroxyacyl-[ACP] = a (2E)-enoyl-[ACP] + H2O. Functionally, involved in unsaturated fatty acids biosynthesis. Catalyzes the dehydration of short chain beta-hydroxyacyl-ACPs and long chain saturated and unsaturated beta-hydroxyacyl-ACPs. This is 3-hydroxyacyl-[acyl-carrier-protein] dehydratase FabZ from Helicobacter pylori (strain J99 / ATCC 700824) (Campylobacter pylori J99).